The chain runs to 576 residues: Homeobox protein invected (576 aa).

5 disordered regions span residues 1 to 68 (MSTL…DEQT), 80 to 102 (EVEE…NSVL), 305 to 344 (GGSV…LAQS), 364 to 410 (NSND…GEDS), and 426 to 476 (SDRP…RPRT). Residues 80 to 91 (EVEEEHDLDLED) are compositionally biased toward acidic residues. 3 stretches are compositionally biased toward low complexity: residues 309–325 (SGSS…TNGN), 364–381 (NSND…TNTS), and 395–405 (AGAGATGASGK). Positions 450 to 468 (AGGGGGGVEKGEAADGGGV) are enriched in gly residues. The homeobox DNA-binding region spans 471-530 (DKRPRTAFSGTQLARLKHEFNENRYLTEKRRQQLSGELGLNEAQIKIWFQNKRAKLKKSS).

It belongs to the engrailed homeobox family. As to expression, expressed in row 6/7 of the embryonic neuroectoderm.

Its subcellular location is the nucleus. Engrailed (en) and invected (inv) are functionally redundant transcription factors in neuronal precursor cell NB5-3 specification. Inv is unable to substitute for en in other regulatory processes such as maintaining gsb expression in the neuroectoderm after stage 10 of embryogenesis. Maintenance of gsb expression in row 5 of the neuroectoderm involves an as yet unidentified short range signaling molecule. The chain is Homeobox protein invected (inv) from Drosophila melanogaster (Fruit fly).